The chain runs to 378 residues: Putative glutamate--cysteine ligase 2 (378 aa).

The protein belongs to the glutamate--cysteine ligase type 2 family. YbdK subfamily.

It carries out the reaction L-cysteine + L-glutamate + ATP = gamma-L-glutamyl-L-cysteine + ADP + phosphate + H(+). Its function is as follows. ATP-dependent carboxylate-amine ligase which exhibits weak glutamate--cysteine ligase activity. The sequence is that of Putative glutamate--cysteine ligase 2 from Salinispora tropica (strain ATCC BAA-916 / DSM 44818 / JCM 13857 / NBRC 105044 / CNB-440).